The chain runs to 891 residues: Protein translocase subunit SecA 1 (891 aa).

Residues Q86, 104–108, and D493 each bind ATP; that span reads GEGKT. Positions 845–873 are enriched in basic and acidic residues; sequence KQVAKPIEASHGDGNRKKAPVVKEKEAGR. The interval 845–891 is disordered; that stretch reads KQVAKPIEASHGDGNRKKAPVVKEKEAGRNDPCPCGSGKKYKKCCGE. 4 residues coordinate Zn(2+): C877, C879, C888, and C889.

This sequence belongs to the SecA family. As to quaternary structure, monomer and homodimer. Part of the essential Sec protein translocation apparatus which comprises SecA, SecYEG and auxiliary proteins SecDF. Other proteins may also be involved. It depends on Zn(2+) as a cofactor.

It localises to the cell membrane. The protein resides in the cytoplasm. The enzyme catalyses ATP + H2O + cellular proteinSide 1 = ADP + phosphate + cellular proteinSide 2.. Part of the Sec protein translocase complex. Interacts with the SecYEG preprotein conducting channel. Has a central role in coupling the hydrolysis of ATP to the transfer of proteins into and across the cell membrane, serving as an ATP-driven molecular motor driving the stepwise translocation of polypeptide chains across the membrane. The chain is Protein translocase subunit SecA 1 from Alkaliphilus metalliredigens (strain QYMF).